The primary structure comprises 224 residues: GrpE protein homolog 2, mitochondrial (224 aa).

The N-terminal 31 residues, 1–31, are a transit peptide targeting the mitochondrion; the sequence is MAARSLWAVQRLQRLLASGAMSESRGWLHPF. Lysine 141 is subject to N6-acetyllysine.

It belongs to the GrpE family. In terms of assembly, probable component of the PAM complex at least composed of a mitochondrial HSP70 protein, GRPEL1 or GRPEL2, TIMM44, TIMM16/PAM16 and TIMM14/DNAJC19. As to expression, ubiquitous.

It localises to the mitochondrion matrix. Functionally, essential component of the PAM complex, a complex required for the translocation of transit peptide-containing proteins from the inner membrane into the mitochondrial matrix in an ATP-dependent manner. Seems to control the nucleotide-dependent binding of mitochondrial HSP70 to substrate proteins. Stimulates ATPase activity of mt-HSP70. May also serve to modulate the interconversion of oligomeric (inactive) and monomeric (active) forms of mt-HSP70. The protein is GrpE protein homolog 2, mitochondrial (Grpel2) of Mus musculus (Mouse).